The chain runs to 503 residues: Lanosterol 14-alpha demethylase (503 aa).

Residues 24 to 44 (GNLLSTLLIACAFTLSLVYLF) traverse the membrane as a helical segment. Cys449 lines the heme pocket.

It belongs to the cytochrome P450 family. It depends on heme as a cofactor. In terms of processing, ubiquitinated by MARCHF6, leading to proteasomal degradation.

The protein resides in the endoplasmic reticulum membrane. The protein localises to the microsome membrane. It catalyses the reaction a 14alpha-methyl steroid + 3 reduced [NADPH--hemoprotein reductase] + 3 O2 = a Delta(14) steroid + formate + 3 oxidized [NADPH--hemoprotein reductase] + 4 H2O + 4 H(+). It carries out the reaction lanosterol + 3 reduced [NADPH--hemoprotein reductase] + 3 O2 = 4,4-dimethyl-5alpha-cholesta-8,14,24-trien-3beta-ol + formate + 3 oxidized [NADPH--hemoprotein reductase] + 4 H2O + 4 H(+). The enzyme catalyses 24,25-dihydrolanosterol + 3 reduced [NADPH--hemoprotein reductase] + 3 O2 = 4,4-dimethyl-8,14-cholestadien-3beta-ol + formate + 3 oxidized [NADPH--hemoprotein reductase] + 4 H2O + 4 H(+). The catalysed reaction is a 14alpha-methyl steroid + reduced [NADPH--hemoprotein reductase] + O2 = a 14alpha-hydroxymethyl steroid + oxidized [NADPH--hemoprotein reductase] + H2O + H(+). It catalyses the reaction a 14alpha-hydroxymethyl steroid + reduced [NADPH--hemoprotein reductase] + O2 = a 14alpha-formyl steroid + oxidized [NADPH--hemoprotein reductase] + 2 H2O + H(+). It carries out the reaction a 14alpha-formyl steroid + reduced [NADPH--hemoprotein reductase] + O2 = a Delta(14) steroid + formate + oxidized [NADPH--hemoprotein reductase] + H2O + 2 H(+). The enzyme catalyses lanosterol + reduced [NADPH--hemoprotein reductase] + O2 = 32-hydroxylanosterol + oxidized [NADPH--hemoprotein reductase] + H2O + H(+). The catalysed reaction is 32-hydroxylanosterol + reduced [NADPH--hemoprotein reductase] + O2 = 32-oxolanosterol + oxidized [NADPH--hemoprotein reductase] + 2 H2O + H(+). It catalyses the reaction 32-oxolanosterol + reduced [NADPH--hemoprotein reductase] + O2 = 4,4-dimethyl-5alpha-cholesta-8,14,24-trien-3beta-ol + formate + oxidized [NADPH--hemoprotein reductase] + H2O + 2 H(+). It carries out the reaction 24,25-dihydrolanosterol + reduced [NADPH--hemoprotein reductase] + O2 = 32-hydroxy-24,25-dihydrolanosterol + oxidized [NADPH--hemoprotein reductase] + H2O + H(+). The enzyme catalyses 32-hydroxy-24,25-dihydrolanosterol + reduced [NADPH--hemoprotein reductase] + O2 = 32-oxo-24,25-dihydrolanosterol + oxidized [NADPH--hemoprotein reductase] + 2 H2O + H(+). The catalysed reaction is 32-oxo-24,25-dihydrolanosterol + reduced [NADPH--hemoprotein reductase] + O2 = 4,4-dimethyl-8,14-cholestadien-3beta-ol + formate + oxidized [NADPH--hemoprotein reductase] + H2O + 2 H(+). The protein operates within steroid biosynthesis; zymosterol biosynthesis; zymosterol from lanosterol: step 1/6. Its activity is regulated as follows. Inhibited by azalanstat. Inhibited by azole antifungal agents ketoconazole, itraconazole and fluconazole. Its function is as follows. Sterol 14alpha-demethylase that plays a critical role in the cholesterol biosynthesis pathway, being cholesterol the major sterol component in mammalian membranes as well as a precursor for bile acid and steroid hormone synthesis. Cytochrome P450 monooxygenase that catalyzes the three-step oxidative removal of the 14alpha-methyl group (C-32) of sterols such as lanosterol (lanosta-8,24-dien-3beta-ol) and 24,25-dihydrolanosterol (DHL) in the form of formate, and converts the sterols to 4,4-dimethyl-5alpha-cholesta-8,14,24-trien-3beta-ol and 4,4-dimethyl-8,14-cholestadien-3beta-ol, respectively, which are intermediates of cholesterol biosynthesis. Can also demethylate substrates not intrinsic to mammals, such as eburicol (24-methylene-24,25-dihydrolanosterol), but at a lower rate than DHL. This Rattus norvegicus (Rat) protein is Lanosterol 14-alpha demethylase.